The chain runs to 384 residues: tRNA-dihydrouridine(20) synthase [NAD(P)+] (384 aa).

FMN is bound by residues 12–14 (PMV) and glutamine 88. The active-site Proton donor is the cysteine 117. FMN-binding positions include lysine 160, histidine 188, 222-224 (NGA), and 249-250 (AE). Positions 359–384 (KQKRKQTDHIGSDTKKQKVVPLPTDI) are disordered. Basic and acidic residues predominate over residues 363–374 (KQTDHIGSDTKK).

Belongs to the Dus family. Dus2 subfamily. In terms of assembly, monomer. It depends on FMN as a cofactor. In terms of processing, N-glycosylated.

The protein localises to the cytoplasm. Its subcellular location is the nucleus. It carries out the reaction 5,6-dihydrouridine(20) in tRNA + NADP(+) = uridine(20) in tRNA + NADPH + H(+). It catalyses the reaction 5,6-dihydrouridine(20) in tRNA + NAD(+) = uridine(20) in tRNA + NADH + H(+). The enzyme catalyses a 5,6-dihydrouridine in mRNA + NAD(+) = a uridine in mRNA + NADH + H(+). The catalysed reaction is a 5,6-dihydrouridine in mRNA + NADP(+) = a uridine in mRNA + NADPH + H(+). In terms of biological role, catalyzes the NADPH-dependent synthesis of dihydrouridine, a modified base found in the D-loop of most tRNAs. Specifically modifies U20 in cytoplasmic tRNAs. Also able to mediate dihydrouridylation of some mRNAs, thereby affecting their translation. This chain is tRNA-dihydrouridine(20) synthase [NAD(P)+] (SMM1), found in Saccharomyces cerevisiae (strain ATCC 204508 / S288c) (Baker's yeast).